The following is a 487-amino-acid chain: MPN domain-containing protein (487 aa).

Positions 1–55 are disordered; sequence MAAPESLSPGATAEEAPEEDEDDAEAEDPERGTGSGGRSGSLGGSGGGTAGPGMA. Alanine 2 carries the N-acetylalanine modification. At serine 8 the chain carries Phosphoserine. Over residues 15-28 the composition is skewed to acidic residues; the sequence is EAPEEDEDDAEAED. Over residues 33–55 the composition is skewed to gly residues; that stretch reads TGSGGRSGSLGGSGGGTAGPGMA. An RAMA domain is found at 61-156; that stretch reads TRRAVTLRVL…KYKAAWLRRH (96 aa). 3 residues coordinate DNA: serine 113, serine 115, and tryptophan 135. The disordered stretch occupies residues 163–217; that stretch reads ATADESPTSEGEEEELLLEEEEEDVLAGVSSEDKGHRPPGKGSLEPEATPPGKRM. Phosphoserine is present on residues serine 168 and serine 171. The span at 172–187 shows a compositional bias: acidic residues; it reads EGEEEELLLEEEEEDV. One can recognise an MPN domain in the interval 258 to 393; sequence VAVSSNVLFL…PESKICPFWV (136 aa). Residues histidine 335, histidine 337, and aspartate 348 each contribute to the Zn(2+) site. The JAMM motif motif lies at 335-348; sequence HSHPHSPAVPSLQD.

This sequence belongs to the peptidase M67 family. As to quaternary structure, monomer. Mainly monomoric, but when binds to dsDNA, forms homotetramer assembled into two homodimers. May interact with histones; this interaction is facilitated by. In terms of processing, degraded following binding to N(6)-methyladenosine methylated DNA (m6A).

Its function is as follows. Probable protease. Acts as a sensor of N(6)-methyladenosine methylation on DNA (m6A): recognizes and binds m6A DNA, leading to its degradation. Binds only double strand DNA (dsDNA) in a sequence-independent manner. The sequence is that of MPN domain-containing protein from Mus musculus (Mouse).